Reading from the N-terminus, the 89-residue chain is Small ribosomal subunit protein uS17 (89 aa).

It belongs to the universal ribosomal protein uS17 family. As to quaternary structure, part of the 30S ribosomal subunit.

One of the primary rRNA binding proteins, it binds specifically to the 5'-end of 16S ribosomal RNA. The sequence is that of Small ribosomal subunit protein uS17 from Polaromonas sp. (strain JS666 / ATCC BAA-500).